Reading from the N-terminus, the 337-residue chain is Draxin (337 aa).

The N-terminal stretch at 1–24 (MLLLALLLLLELSLAGSLGPGSSA) is a signal peptide. Disordered stretches follow at residues 36–67 (GPALWTPQASHHRRRGLGKKERGPGTPGWTQD), 107–133 (RPYPEKETQAPGSERVKKRGREHKRRK), and 234–261 (WPSTRKKEKHRGKLSSDGNETSPAKGEP). 2 stretches are compositionally biased toward basic residues: residues 122 to 133 (VKKRGREHKRRK) and 237 to 246 (TRKKEKHRGK). Asn-252 carries N-linked (GlcNAc...) asparagine glycosylation.

Belongs to the draxin family. As to quaternary structure, interacts with LRP6.

The protein localises to the secreted. In terms of biological role, chemorepulsive axon guidance protein required for the development of spinal cord and forebrain commissures. Acts as a chemorepulsive guidance protein for commissural axons during development. Able to inhibit or repel neurite outgrowth from dorsal spinal cord. Inhibits the stabilization of cytosolic beta-catenin (CTNNB1) via its interaction with LRP6, thereby acting as an antagonist of Wnt signaling pathway. The chain is Draxin from Bos taurus (Bovine).